Reading from the N-terminus, the 500-residue chain is Putative (R)-citramalate synthase CimA (500 aa).

Residues 9 to 258 (LRFFDTTLRD…DTRIRTERLY (250 aa)) enclose the Pyruvate carboxyltransferase domain.

It belongs to the alpha-IPM synthase/homocitrate synthase family. Homodimer.

The enzyme catalyses pyruvate + acetyl-CoA + H2O = (3R)-citramalate + CoA + H(+). It functions in the pathway amino-acid biosynthesis; L-isoleucine biosynthesis; 2-oxobutanoate from pyruvate: step 1/3. Functionally, catalyzes the condensation of pyruvate and acetyl-coenzyme A to form (R)-citramalate. This is Putative (R)-citramalate synthase CimA from Methanosphaerula palustris (strain ATCC BAA-1556 / DSM 19958 / E1-9c).